The primary structure comprises 151 residues: Protein SprT-like (151 aa).

The 141-residue stretch at 7 to 147 (QKLTESISES…GKCKGKLHLH (141 aa)) folds into the SprT-like domain. Residue His67 participates in Zn(2+) binding. Residue Glu68 is part of the active site. Position 71 (His71) interacts with Zn(2+).

It belongs to the SprT family. The cofactor is Zn(2+).

It is found in the cytoplasm. This is Protein SprT-like from Staphylococcus carnosus (strain TM300).